The sequence spans 164 residues: Large ribosomal subunit protein bL21 (164 aa).

A disordered region spans residues 105-164 (KAPTIGPRAKKEKKVEAAPADGEAPAKKAPAKKAAAKKAAPKAAAKKAPAKKAAPKAKSE). The span at 133 to 164 (APAKKAAAKKAAPKAAAKKAPAKKAAPKAKSE) shows a compositional bias: basic residues.

This sequence belongs to the bacterial ribosomal protein bL21 family. Part of the 50S ribosomal subunit. Contacts protein L20.

Functionally, this protein binds to 23S rRNA in the presence of protein L20. The polypeptide is Large ribosomal subunit protein bL21 (Afipia carboxidovorans (strain ATCC 49405 / DSM 1227 / KCTC 32145 / OM5) (Oligotropha carboxidovorans)).